The sequence spans 1052 residues: Multidrug resistance protein MdtB (1052 aa).

11 consecutive transmembrane segments (helical) span residues Leu15–Gly37, Phe345–Leu362, Ala367–Leu389, Leu396–Asn418, Gly438–Phe460, Phe472–Met494, His535–Ile557, Leu867–Ile889, Leu909–Val931, Ile968–Ala990, and Met1000–Phe1022. Residues Lys1032 to Gln1052 form a disordered region.

The protein belongs to the resistance-nodulation-cell division (RND) (TC 2.A.6) family. MdtB subfamily. Part of a tripartite efflux system composed of MdtA, MdtB and MdtC. MdtB forms a heteromultimer with MdtC.

The protein resides in the cell inner membrane. The sequence is that of Multidrug resistance protein MdtB from Yersinia pseudotuberculosis serotype I (strain IP32953).